The chain runs to 65 residues: Light-harvesting protein B-800-850 alpha chain C (65 aa).

Over 1-11 (MNQGRIWTVVS) the chain is Cytoplasmic. A helical transmembrane segment spans residues 12–35 (PTVGLPLLLGSVAAIAFAVHFAVL). An a bacteriochlorophyll-binding site is contributed by His-31. Residues 36 to 65 (ENTSWVAAFMNGKSVAAAPAPAAPAAPAKK) are Periplasmic-facing.

This sequence belongs to the antenna complex alpha subunit family. As to quaternary structure, the core complex is formed by different alpha and beta chains, binding bacteriochlorophyll molecules, and arranged most probably in tetrameric structures disposed around the reaction center. The non-pigmented gamma chains may constitute additional components.

The protein localises to the cell inner membrane. Its function is as follows. Antenna complexes are light-harvesting systems, which transfer the excitation energy to the reaction centers. This Rhodopseudomonas palustris protein is Light-harvesting protein B-800-850 alpha chain C (pucAC).